We begin with the raw amino-acid sequence, 211 residues long: Rho-related GTP-binding protein RhoF (211 aa).

The residue at position 1 (Met-1) is an N-acetylmethionine. Residue 26-33 (GDGGCGKT) participates in GTP binding. The Effector region signature appears at 48-56 (YAPSVFEKY). GTP contacts are provided by residues 73-77 (DTAGQ) and 131-134 (CKTD). Cysteine methyl ester is present on Cys-208. A lipid anchor (S-geranylgeranyl cysteine) is attached at Cys-208. The propeptide at 209–211 (LLL) is removed in mature form.

Belongs to the small GTPase superfamily. Rho family.

It is found in the cell membrane. It localises to the cytoplasm. The protein localises to the cytoskeleton. Plasma membrane-associated small GTPase which cycles between an active GTP-bound and an inactive GDP-bound state. Causes the formation of thin, actin-rich surface projections called filopodia. Functions cooperatively with CDC42 and Rac to generate additional structures, increasing the diversity of actin-based morphology. The protein is Rho-related GTP-binding protein RhoF (Rhof) of Mus musculus (Mouse).